We begin with the raw amino-acid sequence, 736 residues long: Melanotransferrin (736 aa).

An N-terminal signal peptide occupies residues 1-19; sequence MRCRSAAMWIFLALRTALG. 2 consecutive Transferrin-like domains span residues 23 to 357 and 366 to 706; these read VRWC…GLLC and LRWC…GMQS. Cystine bridges form between cysteine 26-cysteine 63 and cysteine 36-cysteine 54. Fe(3+) contacts are provided by aspartate 78 and tyrosine 107. A glycan (N-linked (GlcNAc...) asparagine) is linked at asparagine 118. Cystine bridges form between cysteine 130–cysteine 216, cysteine 172–cysteine 189, cysteine 186–cysteine 199, and cysteine 257–cysteine 271. Residue threonine 132 participates in hydrogencarbonate binding. A glycan (N-linked (GlcNAc...) asparagine) is linked at asparagine 135. 3 residues coordinate hydrogencarbonate: arginine 136, valine 138, and glycine 139. Tyrosine 210 contributes to the Fe(3+) binding site. Positions 279 and 451 each coordinate Fe(3+). Asparagine 515 carries an N-linked (GlcNAc...) asparagine glycan. Histidine 625 contacts Fe(3+). Glycine 711 is lipidated: GPI-anchor amidated glycine. The propeptide at 712-736 is removed in mature form; it reads AAVGAPGASLLPLLPLAVGLLLSSL.

This sequence belongs to the transferrin family.

The protein localises to the cell membrane. Its function is as follows. Involved in iron cellular uptake. Seems to be internalized and then recycled back to the cell membrane. Binds a single atom of iron per subunit. Could also bind zinc. This is Melanotransferrin from Oryctolagus cuniculus (Rabbit).